The sequence spans 229 residues: Heptaprenylglyceryl phosphate synthase (229 aa).

Position 12 (K12) interacts with sn-glycerol 1-phosphate. Residues D14 and S40 each contribute to the Mg(2+) site. Sn-glycerol 1-phosphate contacts are provided by residues 159-164 (YLEYSG), G189, and 209-210 (GN).

Belongs to the GGGP/HepGP synthase family. Group I subfamily. As to quaternary structure, homodimer. It depends on Mg(2+) as a cofactor.

The enzyme catalyses sn-glycerol 1-phosphate + all-trans-heptaprenyl diphosphate = 3-heptaprenyl-sn-glycero-1-phosphate + diphosphate. Its pathway is membrane lipid metabolism; glycerophospholipid metabolism. In terms of biological role, prenyltransferase that catalyzes in vivo the transfer of the heptaprenyl moiety of heptaprenyl pyrophosphate (HepPP; 35 carbon atoms) to the C3 hydroxyl of sn-glycerol-1-phosphate (G1P), producing heptaprenylglyceryl phosphate (HepGP). This reaction is an ether-bond-formation step in the biosynthesis of archaea-type G1P-based membrane lipids found in Bacillales. The sequence is that of Heptaprenylglyceryl phosphate synthase from Bacillus cytotoxicus (strain DSM 22905 / CIP 110041 / 391-98 / NVH 391-98).